We begin with the raw amino-acid sequence, 562 residues long: Laccase-2 (562 aa).

Residues 1 to 26 form the signal peptide; it reads MASAASSLPLLVSSLLLALFALGAHA. Plastocyanin-like domains lie at 34-150 and 160-312; these read DIVM…PAAG and DEAE…YAGV. Asn39, Asn53, Asn72, and Asn80 each carry an N-linked (GlcNAc...) asparagine glycan. Cu cation contacts are provided by His84 and His86. Residue Asn118 is glycosylated (N-linked (GlcNAc...) asparagine). Positions 129 and 131 each coordinate Cu cation. 8 N-linked (GlcNAc...) asparagine glycosylation sites follow: Asn189, Asn244, Asn300, Asn328, Asn376, Asn386, Asn421, and Asn445. Residues 411 to 546 enclose the Plastocyanin-like 3 domain; it reads DFPDRPPARF…KMAFLVEDGS (136 aa). Residues His463, His466, His468, His525, Cys526, His527, and His531 each coordinate Cu cation.

This sequence belongs to the multicopper oxidase family. Cu cation serves as cofactor.

The protein resides in the secreted. The protein localises to the extracellular space. Its subcellular location is the apoplast. The enzyme catalyses 4 hydroquinone + O2 = 4 benzosemiquinone + 2 H2O. Lignin degradation and detoxification of lignin-derived products. In Oryza sativa subsp. japonica (Rice), this protein is Laccase-2 (LAC2).